Here is a 615-residue protein sequence, read N- to C-terminus: Semenogelin-1 (615 aa).

Positions Met1–Gly23 are cleaved as a signal peptide. Gln24 is modified (pyrrolidone carboxylic acid). Disordered regions lie at residues Gln24 to Lys118, Gly133 to Ser160, and Gly172 to Tyr585. A compositionally biased stretch (polar residues) spans Ser34–Gln46. Residues Ala50–Arg80 show a composition bias toward basic and acidic residues. Residues Thr81–Asn91 are compositionally biased toward polar residues. Residues Phe107 to Lys118 are compositionally biased toward basic and acidic residues. 3 stretches are compositionally biased toward polar residues: residues Gly138 to Ser160, Ser177 to Leu196, and Thr209 to Glu224. N-linked (GlcNAc...) asparagine glycosylation is found at Asn148, Asn184, and Asn223. The span at Gln241–Phe253 shows a compositional bias: basic and acidic residues. Over residues Ser254–Gln265 the composition is skewed to polar residues. N-linked (GlcNAc...) asparagine glycosylation is found at Asn258 and Asn275. Over residues Thr283–Ser300 the composition is skewed to basic and acidic residues. Asn306 is a glycosylation site (N-linked (GlcNAc...) asparagine). Residues Thr308–Gln317 show a composition bias toward basic and acidic residues. Asn332 is a glycosylation site (N-linked (GlcNAc...) asparagine). The span at Thr341 to Ser358 shows a compositional bias: basic and acidic residues. Asn364 is a glycosylation site (N-linked (GlcNAc...) asparagine). The segment covering Thr366–Gln375 has biased composition (basic and acidic residues). N-linked (GlcNAc...) asparagine glycosylation is present at Asn390. Residues Thr399–Ser416 are compositionally biased toward basic and acidic residues. Asn422 carries N-linked (GlcNAc...) asparagine glycosylation. Positions Thr424–Gln433 are enriched in basic and acidic residues. Asn448 carries N-linked (GlcNAc...) asparagine glycosylation. Basic and acidic residues predominate over residues Thr457 to Ser474. A glycan (N-linked (GlcNAc...) asparagine) is linked at Asn480. Residues Lys481–Gln491 show a composition bias toward basic and acidic residues. A glycan (N-linked (GlcNAc...) asparagine) is linked at Asn506. Over residues Thr515–Ser532 the composition is skewed to basic and acidic residues. N-linked (GlcNAc...) asparagine glycosylation is present at Asn538. A compositionally biased stretch (basic and acidic residues) spans Lys539–Gln549. Over residues Lys550–Gln563 the composition is skewed to polar residues.

Belongs to the semenogelin family. As to quaternary structure, occurs in disulfide-linked complexes. Transglutaminase substrate. In terms of processing, rapidly cleaved after ejaculation by KLK3/PSA, resulting in liquefaction of the semen coagulum and the progressive release of motile spermatozoa.

The protein resides in the secreted. Predominant protein in semen. It participates in the formation of a gel matrix entrapping the accessory gland secretions and ejaculated spermatozoa. Fragments of semenogelin and/or fragments of the related proteins may contribute to the activation of progressive sperm movements as the gel-forming proteins are fragmented by KLK3/PSA. This chain is Semenogelin-1 (SEMG1), found in Saguinus oedipus (Cotton-top tamarin).